The primary structure comprises 909 residues: E3 ubiquitin-protein ligase HACE1 (909 aa).

Residues 1 to 21 (MERAMEQLNRLTRSLRRARTV) form an N-terminal helix important for homodimerization region. ANK repeat units lie at residues 23 to 55 (LPDD…NSKF), 64 to 93 (VKRS…NPNY), 97 to 126 (SGCT…DVNI), 130 to 159 (EGLT…DVDV), 163 to 192 (MGQT…DINR), 196 to 226 (SGAT…YLSD), and 228 to 253 (NGVT…QYHP). Residues 396 to 433 (KGQDQDGTSIPPFEPPGPGSYENLSTGTGESKPDVLGG) form a disordered region. The region spanning 574 to 909 (NCAKLKQGIA…HCGSYGYTMA (336 aa)) is the HECT domain. The active-site Glycyl thioester intermediate is the C876.

As to quaternary structure, homodimer. The homodimer is autoinhibited and stabilized by its N-terminal helix. Interacts with RAB1 (RAB1A, RAB1B or RAB1C), RAB4 (RAB4A or RAB4B) and RAB11 (RAB11A or RAB11B); in a GTP-dependent manner. Interacts with the 26S proteasomal complex through the 20S core proteasomal subunit. Interacts with RARB. In terms of processing, autoubiquitinated.

Its subcellular location is the golgi apparatus. It localises to the golgi stack membrane. It is found in the cytoplasm. The protein resides in the endoplasmic reticulum. It carries out the reaction S-ubiquitinyl-[E2 ubiquitin-conjugating enzyme]-L-cysteine + [acceptor protein]-L-lysine = [E2 ubiquitin-conjugating enzyme]-L-cysteine + N(6)-ubiquitinyl-[acceptor protein]-L-lysine.. The protein operates within protein modification; protein ubiquitination. Functionally, E3 ubiquitin-protein ligase involved in Golgi membrane fusion and regulation of small GTPases. Acts as a regulator of Golgi membrane dynamics during the cell cycle: recruited to Golgi membrane by Rab proteins and regulates postmitotic Golgi membrane fusion. Acts by mediating ubiquitination during mitotic Golgi disassembly, ubiquitination serving as a signal for Golgi reassembly later, after cell division. Specifically binds GTP-bound RAC1, mediating ubiquitination and subsequent degradation of active RAC1, thereby playing a role in host defense against pathogens. May also act as a transcription regulator via its interaction with RARB. This is E3 ubiquitin-protein ligase HACE1 (HACE1) from Bos taurus (Bovine).